Here is a 216-residue protein sequence, read N- to C-terminus: Probable GTP-binding protein EngB (216 aa).

The EngB-type G domain maps to 27-201 (GGVEIAFAGR…AQTLTGWYLA (175 aa)). GTP is bound by residues 35-42 (GRSNAGKS), 62-66 (GRTQL), 80-83 (DLPG), 147-150 (TKAD), and 180-182 (FSS). Mg(2+) contacts are provided by S42 and T64.

The protein belongs to the TRAFAC class TrmE-Era-EngA-EngB-Septin-like GTPase superfamily. EngB GTPase family. Mg(2+) serves as cofactor.

Functionally, necessary for normal cell division and for the maintenance of normal septation. The chain is Probable GTP-binding protein EngB from Aeromonas hydrophila subsp. hydrophila (strain ATCC 7966 / DSM 30187 / BCRC 13018 / CCUG 14551 / JCM 1027 / KCTC 2358 / NCIMB 9240 / NCTC 8049).